The chain runs to 78 residues: Conotoxin TsMSGL-11 (78 aa).

The first 24 residues, 1–24 (MSGLGIMVLTLLLLVFMATSHQDA), serve as a signal peptide directing secretion. A propeptide spanning residues 25 to 44 (GEKQATQRDAINVRRRRSIT) is cleaved from the precursor. 3 cysteine pairs are disulfide-bonded: cysteine 51–cysteine 63, cysteine 55–cysteine 72, and cysteine 62–cysteine 76. Phenylalanine 77 carries the phenylalanine amide modification.

Belongs to the conotoxin O3 superfamily. In terms of tissue distribution, expressed by the venom duct.

It localises to the secreted. In Conus tessulatus (Tessellate cone), this protein is Conotoxin TsMSGL-11.